Consider the following 393-residue polypeptide: Asparagine--oxo-acid transaminase (393 aa).

Residues G39, W126, and N176 each contribute to the L-asparagine site. Residue K239 is modified to N6-(pyridoxal phosphate)lysine. R370 serves as a coordination point for L-asparagine.

This sequence belongs to the class-I pyridoxal-phosphate-dependent aminotransferase family. It depends on pyridoxal 5'-phosphate as a cofactor.

It carries out the reaction a 2-oxocarboxylate + L-asparagine = 2-oxosuccinamate + an L-alpha-amino acid. It catalyses the reaction L-asparagine + 2-oxoglutarate = 2-oxosuccinamate + L-glutamate. Catalyzes the transamination reaction between L-asparagine and 2-oxoglutarate to produce L-glutamate and 2-oxosuccinamate. Is not active with pyruvate as amine acceptor. May also use other amino acids as substrates. This Streptococcus mutans serotype c (strain ATCC 700610 / UA159) protein is Asparagine--oxo-acid transaminase.